We begin with the raw amino-acid sequence, 838 residues long: Extragenic suppressor of kinetochore protein 1 (838 aa).

Ser411 and Ser418 each carry phosphoserine. The tract at residues 411–468 is disordered; it reads SDEDDDDSTFSDKNSKDFKETEDMNGAEDMHGRAPQITKDNLNLTTTDSPMSEAEPVS. Thr419 is modified (phosphothreonine). The segment covering 423–442 has biased composition (basic and acidic residues); the sequence is KNSKDFKETEDMNGAEDMHG. Residues Ser425, Ser459, Ser468, and Ser491 each carry the phosphoserine modification. The span at 448–460 shows a compositional bias: polar residues; that stretch reads TKDNLNLTTTDSP. Residue Thr493 is modified to Phosphothreonine. Phosphoserine is present on Ser494. Acidic residues predominate over residues 690 to 700; it reads ELESNSSDDDV. Disordered stretches follow at residues 690-745 and 757-838; these read ELES…DQDN and ISDN…NHGK. Ser711 and Ser713 each carry phosphoserine. A compositionally biased stretch (acidic residues) spans 714 to 723; it reads NDEDDGNDED. Residues 724–734 show a composition bias toward basic and acidic residues; sequence PLSREMSRRLS. Acidic residues-rich tracts occupy residues 768–779 and 806–818; these read SDEDDDDDDEVV and SDSEEEDGNDSSD.

The protein belongs to the SAPS family. Interacts with ppe1 and mis12.

It is found in the nucleus. In terms of biological role, has a role in chromosome segregation. May provide a dynamic connection between kinetochore microtubules and kinetochore chromatin. This chain is Extragenic suppressor of kinetochore protein 1 (ekc1), found in Schizosaccharomyces pombe (strain 972 / ATCC 24843) (Fission yeast).